An 845-amino-acid chain; its full sequence is Receptor-like protein Cf-9 homolog (845 aa).

The N-terminal stretch at 1–19 (MGCVKLVFFMLLKLDLLEF) is a signal peptide. The interval 20 to 70 (KNMFTVNPNASDYCYDYTDQRMQSYPRTLFWNKSTDCCSWDGIHCDETTGQ) is N-cap. At 20 to 794 (KNMFTVNPNA…EEDSPMISWQ (775 aa)) the chain is on the extracellular side. Residues N28, N51, and N88 are each glycosylated (N-linked (GlcNAc...) asparagine). The stretch at 71–94 (VVELDLRCSQLQGKFHSNSSLFQL) is one LRR 1; degenerate repeat. LRR repeat units follow at residues 95–118 (SNLKRLDLSFNDFTGSLISPKFGE), 119–143 (FSDLTHLDLSDSNFTGVIPSEISHL), 144–171 (SKLHVLRIHDLNELSLGPHNFELLLKNL), 172–193 (TQLRELNLDSVNISSTIPSNFS), 194–217 (SHLTNLWLPYTELRGVLPERVFHL), 219–242 (DLEFLHLSYNPQLTVRFPTTKWNS), 244–266 (ASLMKLYVHSVNIADRIPESFSH), 267–291 (LTSLHALYMGRCNLSGHIPKPLWNL), 292–316 (TNIESLFLGDNHLEGPIPQLTRFEK), 318–338 (KRLSLGNNNLHGGLEFLSFNR), 340–364 (WTQLEILYFSSNYLTGPIPSNVSGL), 365–388 (QNLGWLFLSSNHLNGSIPSWIFSL), 390–410 (SLVVLDLSNNTFSGKIQEFKS), 411–434 (KTLSTVTLKQNQLEGPIPNSLLNQ), 436–458 (SLQFLLLSHNNISGYISSSICNL), 459–482 (KTLMVLDLGSNNLEGTIPQCVGER), 484–506 (EYLLDLDLSNNRLSGTINTTFSI), 507–531 (GNSFKAISLHGNKLTGKVPRSLINC), 532–554 (KYLKLLDLGNNQLNDTFPNWLGY), 555–579 (LSQLKILSLRSNKLHGPIKSSGSTN), 581–605 (FMRLQILDLSSNGFSGNLPERILGN), 649–672 (LDSNMIINLSKNRFEGHIPSIIGD), 673–696 (LVGLRTLNLSRNALEGHIPASFQN), 698–721 (SVLESLDLSSNRISGEIPQQLASL), and 723–741 (FLEVLNLSHNHLVGCIPKG). N-linked (GlcNAc...) asparagine glycosylation is found at N131, N170, N183, and N191. N241 is a glycosylation site (N-linked (GlcNAc...) asparagine). N-linked (GlcNAc...) asparagine glycans are attached at residues N279 and N290. 4 N-linked (GlcNAc...) asparagine glycosylation sites follow: N337, N360, N378, and N398. Residue N446 is glycosylated (N-linked (GlcNAc...) asparagine). Residue N501 is glycosylated (N-linked (GlcNAc...) asparagine). N545 carries an N-linked (GlcNAc...) asparagine glycan. N-linked (GlcNAc...) asparagine glycans are attached at residues N656, N680, and N696. N-linked (GlcNAc...) asparagine glycans are attached at residues N728 and N749. The tract at residues 742–794 (KQFDSFGNTSYQGNDGLRGFPLSKLCGVDDQVTTPAELDQEEEEEDSPMISWQ) is C-cap/acidic domain. A helical membrane pass occupies residues 795-815 (GVLVGYGCGLVIGLSVIYIMW). Over 816-845 (STQYPAWFSRMDLKLEHIITTRMKKHKKRY) the chain is Cytoplasmic.

Belongs to the RLP family.

It is found in the cell membrane. Its function is as follows. At the opposite of its homolog Cf-9 found in S.pimpinellifolium, was not able to confer resistance to the fungal pathogen C.fulvum. The chain is Receptor-like protein Cf-9 homolog from Solanum lycopersicum (Tomato).